The following is a 210-amino-acid chain: 3-hexulose-6-phosphate synthase (210 aa).

This sequence belongs to the HPS/KGPDC family. HPS subfamily.

It catalyses the reaction D-ribulose 5-phosphate + formaldehyde = D-arabino-hex-3-ulose 6-phosphate. It functions in the pathway one-carbon metabolism; formaldehyde assimilation via RuMP pathway; D-fructose 6-phosphate from D-ribulose 5-phosphate and formaldehyde: step 1/2. Its function is as follows. Catalyzes the condensation of ribulose 5-phosphate with formaldehyde to form 3-hexulose 6-phosphate. In Staphylococcus epidermidis (strain ATCC 12228 / FDA PCI 1200), this protein is 3-hexulose-6-phosphate synthase.